The chain runs to 343 residues: 4-hydroxy-2-oxovalerate aldolase 2 (343 aa).

The 253-residue stretch at 8–260 folds into the Pyruvate carboxyltransferase domain; that stretch reads ITVHDMSLRD…ETGVDVFAIS (253 aa). 16-17 is a binding site for substrate; it reads RD. Residue D17 coordinates Mn(2+). H20 serves as the catalytic Proton acceptor. Substrate-binding residues include S170 and H199. 2 residues coordinate Mn(2+): H199 and H201. A substrate-binding site is contributed by Y290.

The protein belongs to the 4-hydroxy-2-oxovalerate aldolase family.

It carries out the reaction (S)-4-hydroxy-2-oxopentanoate = acetaldehyde + pyruvate. This chain is 4-hydroxy-2-oxovalerate aldolase 2, found in Burkholderia lata (strain ATCC 17760 / DSM 23089 / LMG 22485 / NCIMB 9086 / R18194 / 383).